Reading from the N-terminus, the 269-residue chain is Undecaprenyl-diphosphatase (269 aa).

A run of 7 helical transmembrane segments spans residues 41–61 (FATMFEIVIQLGAILAVVFHY), 78–98 (GFNLWFKIFIAFIPAAVIGLL), 107–127 (LFSPFTVAIALIAGAIMMIVI), 148–167 (SLLIGIAQVMSLFPGMSRSA), 184–204 (AEFSFFLAIPTMFAATTLSLL), 213–233 (LEWQALAVGFITSFLTALFVV), and 248–268 (FAYYRLAVGVLMILLVAEKIV).

Belongs to the UppP family.

The protein localises to the cell membrane. The catalysed reaction is di-trans,octa-cis-undecaprenyl diphosphate + H2O = di-trans,octa-cis-undecaprenyl phosphate + phosphate + H(+). In terms of biological role, catalyzes the dephosphorylation of undecaprenyl diphosphate (UPP). Confers resistance to bacitracin. This is Undecaprenyl-diphosphatase from Thermoanaerobacter pseudethanolicus (strain ATCC 33223 / 39E) (Clostridium thermohydrosulfuricum).